Reading from the N-terminus, the 131-residue chain is ATP synthase epsilon chain (131 aa).

It belongs to the ATPase epsilon chain family. As to quaternary structure, F-type ATPases have 2 components, CF(1) - the catalytic core - and CF(0) - the membrane proton channel. CF(1) has five subunits: alpha(3), beta(3), gamma(1), delta(1), epsilon(1). CF(0) has three main subunits: a, b and c.

Its subcellular location is the cell membrane. In terms of biological role, produces ATP from ADP in the presence of a proton gradient across the membrane. In Bacillus licheniformis (strain ATCC 14580 / DSM 13 / JCM 2505 / CCUG 7422 / NBRC 12200 / NCIMB 9375 / NCTC 10341 / NRRL NRS-1264 / Gibson 46), this protein is ATP synthase epsilon chain.